Reading from the N-terminus, the 221-residue chain is PKHD-type hydroxylase P9211_12561 (221 aa).

Residues 80-174 enclose the Fe2OG dioxygenase domain; that stretch reads KVHGTMFTRS…RIVCVGWIQS (95 aa). Fe cation contacts are provided by His-98, Asp-100, and His-155. Arg-165 contacts 2-oxoglutarate.

It depends on Fe(2+) as a cofactor. Requires L-ascorbate as cofactor.

The protein is PKHD-type hydroxylase P9211_12561 of Prochlorococcus marinus (strain MIT 9211).